The chain runs to 725 residues: Polyribonucleotide nucleotidyltransferase (725 aa).

The Mg(2+) site is built by Asp488 and Asp494. The KH domain occupies 555–614 (PRMITMKIHPDKIREVIGKGGSTIQALTKETGTTIDIQEDGTITIASTSTDGMAEAKRRI). The S1 motif domain occupies 624-692 (GKIYAGTVLK…EKGRLRLSLK (69 aa)). Positions 702-725 (ISPIAQGDAPAAAPAAPASPDQQQ) are disordered. Low complexity predominate over residues 706-725 (AQGDAPAAAPAAPASPDQQQ).

This sequence belongs to the polyribonucleotide nucleotidyltransferase family. It depends on Mg(2+) as a cofactor.

The protein resides in the cytoplasm. It carries out the reaction RNA(n+1) + phosphate = RNA(n) + a ribonucleoside 5'-diphosphate. Its function is as follows. Involved in mRNA degradation. Catalyzes the phosphorolysis of single-stranded polyribonucleotides processively in the 3'- to 5'-direction. The protein is Polyribonucleotide nucleotidyltransferase of Cupriavidus metallidurans (strain ATCC 43123 / DSM 2839 / NBRC 102507 / CH34) (Ralstonia metallidurans).